Consider the following 329-residue polypeptide: Acetyl-coenzyme A carboxylase carboxyl transferase subunit alpha (329 aa).

The 255-residue stretch at 40–294 folds into the CoA carboxyltransferase C-terminal domain; sequence QLESLASRRR…RAALERHLGE (255 aa).

This sequence belongs to the AccA family. In terms of assembly, acetyl-CoA carboxylase is a heterohexamer composed of biotin carboxyl carrier protein (AccB), biotin carboxylase (AccC) and two subunits each of ACCase subunit alpha (AccA) and ACCase subunit beta (AccD).

The protein resides in the cytoplasm. The catalysed reaction is N(6)-carboxybiotinyl-L-lysyl-[protein] + acetyl-CoA = N(6)-biotinyl-L-lysyl-[protein] + malonyl-CoA. It functions in the pathway lipid metabolism; malonyl-CoA biosynthesis; malonyl-CoA from acetyl-CoA: step 1/1. In terms of biological role, component of the acetyl coenzyme A carboxylase (ACC) complex. First, biotin carboxylase catalyzes the carboxylation of biotin on its carrier protein (BCCP) and then the CO(2) group is transferred by the carboxyltransferase to acetyl-CoA to form malonyl-CoA. In Synechococcus sp. (strain CC9902), this protein is Acetyl-coenzyme A carboxylase carboxyl transferase subunit alpha.